Here is a 580-residue protein sequence, read N- to C-terminus: Putative Xaa-Pro dipeptidyl-peptidase (580 aa).

Catalysis depends on charge relay system residues serine 207, aspartate 319, and histidine 350.

This sequence belongs to the peptidase S15 family.

The catalysed reaction is Hydrolyzes Xaa-Pro-|- bonds to release unblocked, N-terminal dipeptides from substrates including Ala-Pro-|-p-nitroanilide and (sequentially) Tyr-Pro-|-Phe-Pro-|-Gly-Pro-|-Ile.. The polypeptide is Putative Xaa-Pro dipeptidyl-peptidase (Bacillus cereus (strain ATCC 14579 / DSM 31 / CCUG 7414 / JCM 2152 / NBRC 15305 / NCIMB 9373 / NCTC 2599 / NRRL B-3711)).